The primary structure comprises 106 residues: MMKLIVVFVISSLLFATQFSNGDELESQAQAPAIHKNGGEGSLKPEECPKACEYRCSATSHRKPCLFFCNKCCNKCLCVPSGTYGHKEECPCYNNWTTKEGGPKCP.

An N-terminal signal peptide occupies residues 1 to 22 (MMKLIVVFVISSLLFATQFSNG).

It belongs to the GASA family. Six disulfide bonds may be present.

The protein resides in the secreted. Functionally, gibberellin-regulated protein that may function in hormonal controlled steps of development such as seed germination, flowering and seed maturation. The protein is Gibberellin-regulated protein 12 (GASA12) of Arabidopsis thaliana (Mouse-ear cress).